Here is a 119-residue protein sequence, read N- to C-terminus: UPF0102 protein HI_1656 (119 aa).

The protein belongs to the UPF0102 family.

The sequence is that of UPF0102 protein HI_1656 from Haemophilus influenzae (strain ATCC 51907 / DSM 11121 / KW20 / Rd).